Reading from the N-terminus, the 410-residue chain is Ribosomal protein S6 kinase-related protein (410 aa).

The Protein kinase domain occupies 107 to 274 (LKILGLVAKG…GTLQYMAPEV (168 aa)). ATP contacts are provided by residues 113–121 (VAKGSFGTV) and Lys-136. The Proton acceptor role is filled by Asp-229.

The protein belongs to the protein kinase superfamily. Ser/Thr protein kinase family.

The enzyme catalyses L-seryl-[protein] + ATP = O-phospho-L-seryl-[protein] + ADP + H(+). It carries out the reaction L-threonyl-[protein] + ATP = O-phospho-L-threonyl-[protein] + ADP + H(+). The chain is Ribosomal protein S6 kinase-related protein from Homo sapiens (Human).